The primary structure comprises 144 residues: Maximins 11/H11 (144 aa).

Residues 1–18 form the signal peptide; sequence MNFKYIVAVSFLIASAYA. A propeptide spanning residues 19–43 is cleaved from the precursor; it reads RSEENDEQSLSQRDVLEEESLREIR. At asparagine 70 the chain carries Asparagine amide. Residues 74–123 constitute a propeptide that is removed on maturation; it reads TAEDHEVMKRLEAVMRDLDSLDYPEEASERETRGFNQEEIANLFTKKEKR. The residue at position 143 (isoleucine 143) is an Isoleucine amide.

Belongs to the bombinin family. As to expression, expressed by the skin glands.

It localises to the secreted. Its function is as follows. Maximin-11 shows antimicrobial activity against bacteria and against the fungus C.albicans. It has little hemolytic activity. Maximin-H11 shows antimicrobial activity against bacteria and against the fungus C.albicans. Shows strong hemolytic activity. In Bombina maxima (Giant fire-bellied toad), this protein is Maximins 11/H11.